A 228-amino-acid polypeptide reads, in one-letter code: MCPKGSSVKGSLLLLLLMSSRFLFKAVESLPICPSGAVNCQVSLSDLFDRAVMLSHYIHSPSSEMFNEFDERYAQGRGFITKAINSCHTSSLSTPEDKEQAQQIRHEDLLNLVLRVLRSWSEPLYHLVTEVRSMQEAPDTILLKAMEIEEQNKRLLEGMEKIVGQVHPGDRENEVYSVWSGLPSLQMADEDTRLFAFYNLLHCLRRDSHKIDNYLKLLKCRLIHDSNC.

Positions 1–29 (MCPKGSSVKGSLLLLLLMSSRFLFKAVES) are cleaved as a signal peptide. Cys33 and Cys40 form a disulfide bridge. A phosphoserine mark is found at Ser55, Ser63, and Ser119. 2 disulfide bridges follow: Cys87-Cys203 and Cys220-Cys228.

It belongs to the somatotropin/prolactin family. Interacts with PRLR.

The protein localises to the secreted. In terms of biological role, prolactin acts primarily on the mammary gland by promoting lactation. This is Prolactin (PRL) from Monodelphis domestica (Gray short-tailed opossum).